We begin with the raw amino-acid sequence, 137 residues long: Putative pre-16S rRNA nuclease (137 aa).

The protein belongs to the YqgF nuclease family.

It localises to the cytoplasm. Could be a nuclease involved in processing of the 5'-end of pre-16S rRNA. The sequence is that of Putative pre-16S rRNA nuclease from Bacillus mycoides (strain KBAB4) (Bacillus weihenstephanensis).